The sequence spans 316 residues: Haloacid dehalogenase-like hydrolase domain-containing protein At4g39970 (316 aa).

The transit peptide at 1–46 (MAVSCNHSAILFSPSSTAGSSSVTSSSSLIGFPRFQTLRFKSRSVY) directs the protein to the chloroplast. Asp-69 serves as the catalytic Nucleophile. Residues Asp-69, Asp-71, and Asp-259 each coordinate Mg(2+). Residue Asp-71 is the Proton donor of the active site.

It belongs to the HAD-like hydrolase superfamily. DOG/GPP family. It depends on Mg(2+) as a cofactor.

It is found in the plastid. The protein resides in the chloroplast. This chain is Haloacid dehalogenase-like hydrolase domain-containing protein At4g39970, found in Arabidopsis thaliana (Mouse-ear cress).